A 173-amino-acid polypeptide reads, in one-letter code: NADH-ubiquinone oxidoreductase chain 6 (173 aa).

The next 5 membrane-spanning stretches (helical) occupy residues 1-21 (MTYF…AVAS), 25-45 (PYFA…VLVG), 53-73 (LVLF…SAAL), 87-107 (VLGY…FFWG), and 141-161 (GGML…VLEL).

It belongs to the complex I subunit 6 family.

Its subcellular location is the mitochondrion membrane. The enzyme catalyses a ubiquinone + NADH + 5 H(+)(in) = a ubiquinol + NAD(+) + 4 H(+)(out). Its function is as follows. Core subunit of the mitochondrial membrane respiratory chain NADH dehydrogenase (Complex I) that is believed to belong to the minimal assembly required for catalysis. Complex I functions in the transfer of electrons from NADH to the respiratory chain. The immediate electron acceptor for the enzyme is believed to be ubiquinone. The sequence is that of NADH-ubiquinone oxidoreductase chain 6 (MT-ND6) from Carassius auratus (Goldfish).